The primary structure comprises 378 residues: Succinyl-diaminopimelate desuccinylase (378 aa).

Residue histidine 68 coordinates Zn(2+). The active site involves aspartate 70. Zn(2+) is bound at residue aspartate 101. The Proton acceptor role is filled by glutamate 135. Glutamate 136, glutamate 164, and histidine 350 together coordinate Zn(2+).

It belongs to the peptidase M20A family. DapE subfamily. As to quaternary structure, homodimer. Zn(2+) serves as cofactor. The cofactor is Co(2+).

It catalyses the reaction N-succinyl-(2S,6S)-2,6-diaminopimelate + H2O = (2S,6S)-2,6-diaminopimelate + succinate. It functions in the pathway amino-acid biosynthesis; L-lysine biosynthesis via DAP pathway; LL-2,6-diaminopimelate from (S)-tetrahydrodipicolinate (succinylase route): step 3/3. Catalyzes the hydrolysis of N-succinyl-L,L-diaminopimelic acid (SDAP), forming succinate and LL-2,6-diaminopimelate (DAP), an intermediate involved in the bacterial biosynthesis of lysine and meso-diaminopimelic acid, an essential component of bacterial cell walls. This is Succinyl-diaminopimelate desuccinylase from Vibrio parahaemolyticus serotype O3:K6 (strain RIMD 2210633).